Here is a 396-residue protein sequence, read N- to C-terminus: Argininosuccinate synthase (396 aa).

Residues 10 to 18 (AYSGGLDTS) and Ala37 contribute to the ATP site. Residues Tyr88 and Ser93 each coordinate L-citrulline. Gly118 contributes to the ATP binding site. Thr120, Asn124, and Asp125 together coordinate L-aspartate. Asn124 is a binding site for L-citrulline. Residues Arg128, Ser176, Ser185, Glu261, and Tyr273 each coordinate L-citrulline.

It belongs to the argininosuccinate synthase family. Type 1 subfamily. In terms of assembly, homotetramer.

The protein localises to the cytoplasm. It carries out the reaction L-citrulline + L-aspartate + ATP = 2-(N(omega)-L-arginino)succinate + AMP + diphosphate + H(+). The protein operates within amino-acid biosynthesis; L-arginine biosynthesis; L-arginine from L-ornithine and carbamoyl phosphate: step 2/3. This chain is Argininosuccinate synthase, found in Nitratidesulfovibrio vulgaris (strain ATCC 29579 / DSM 644 / CCUG 34227 / NCIMB 8303 / VKM B-1760 / Hildenborough) (Desulfovibrio vulgaris).